The following is a 136-amino-acid chain: Aspartate 1-decarboxylase (136 aa).

Ser-25 serves as the catalytic Schiff-base intermediate with substrate; via pyruvic acid. Ser-25 is subject to Pyruvic acid (Ser). Substrate is bound at residue Thr-57. Residue Tyr-58 is the Proton donor of the active site. Residue Gly-73–Ala-75 participates in substrate binding. The disordered stretch occupies residues Ile-117–Asn-136.

The protein belongs to the PanD family. Heterooctamer of four alpha and four beta subunits. It depends on pyruvate as a cofactor. Post-translationally, is synthesized initially as an inactive proenzyme, which is activated by self-cleavage at a specific serine bond to produce a beta-subunit with a hydroxyl group at its C-terminus and an alpha-subunit with a pyruvoyl group at its N-terminus.

The protein localises to the cytoplasm. The enzyme catalyses L-aspartate + H(+) = beta-alanine + CO2. It participates in cofactor biosynthesis; (R)-pantothenate biosynthesis; beta-alanine from L-aspartate: step 1/1. Catalyzes the pyruvoyl-dependent decarboxylation of aspartate to produce beta-alanine. This is Aspartate 1-decarboxylase from Chloroherpeton thalassium (strain ATCC 35110 / GB-78).